A 311-amino-acid polypeptide reads, in one-letter code: Methionyl-tRNA formyltransferase (311 aa).

Residue 112–115 (SLLP) participates in (6S)-5,6,7,8-tetrahydrofolate binding.

It belongs to the Fmt family.

The catalysed reaction is L-methionyl-tRNA(fMet) + (6R)-10-formyltetrahydrofolate = N-formyl-L-methionyl-tRNA(fMet) + (6S)-5,6,7,8-tetrahydrofolate + H(+). Functionally, attaches a formyl group to the free amino group of methionyl-tRNA(fMet). The formyl group appears to play a dual role in the initiator identity of N-formylmethionyl-tRNA by promoting its recognition by IF2 and preventing the misappropriation of this tRNA by the elongation apparatus. The protein is Methionyl-tRNA formyltransferase of Rhizobium meliloti (strain 1021) (Ensifer meliloti).